A 564-amino-acid polypeptide reads, in one-letter code: Alpha-farnesene synthase (564 aa).

Mg(2+) is bound by residues Asp313, Asp317, Thr464, and Glu468. The DDXXD motif signature appears at 313–317 (DDVYD).

This sequence belongs to the terpene synthase family. The cofactor is Mg(2+).

The catalysed reaction is (2E,6E)-farnesyl diphosphate = (3E,6E)-alpha-farnesene + diphosphate. In terms of biological role, catalyzes the cyclization of farnesyl diphosphate to (E,E)-alpha-farnesene. This is Alpha-farnesene synthase (TPS7) from Ricinus communis (Castor bean).